Reading from the N-terminus, the 373-residue chain is Peroxisomal biogenesis factor 3 (373 aa).

At 1 to 15 (MFRSTWNFLKRHKKK) the chain is on the cytoplasmic side. Positions 1–45 (MFRSTWNFLKRHKKKCIFLGTVLGGVYILGKYGQKKIREIQEREA) are targeting to peroxisomes. A helical membrane pass occupies residues 16–36 (CIFLGTVLGGVYILGKYGQKK). The Peroxisomal segment spans residues 37 to 116 (IREIQEREAA…LKIISFTRSI (80 aa)). Residues 117–140 (VAVYSTCMLVVLLRVQLNIIGGYI) form a helical membrane-spanning segment. The tract at residues 120–136 (YSTCMLVVLLRVQLNII) is interaction with PEX19. Residues 141 to 373 (YLDNAAVGKN…AFSTPQQLEK (233 aa)) lie on the Cytoplasmic side of the membrane.

The protein belongs to the peroxin-3 family. In terms of assembly, interacts with PEX19.

It localises to the peroxisome membrane. Involved in peroxisome biosynthesis and integrity. Assembles membrane vesicles before the matrix proteins are translocated. As a docking factor for PEX19, is necessary for the import of peroxisomal membrane proteins in the peroxisomes. The sequence is that of Peroxisomal biogenesis factor 3 (PEX3) from Bos taurus (Bovine).